A 176-amino-acid chain; its full sequence is DNA-directed RNA polymerase II subunit 7 (176 aa).

The protein belongs to the eukaryotic RPB7/RPC8 RNA polymerase subunit family. In terms of assembly, component of the RNA polymerase II complex consisting of at least 12 subunits. Interacts with NRPB4.

The protein resides in the nucleus. In terms of biological role, DNA-dependent RNA polymerase catalyzes the transcription of DNA into RNA using the four ribonucleoside triphosphates as substrates. Component of RNA polymerase II which synthesizes mRNA precursors and many functional non-coding RNAs. Pol II is the central component of the basal RNA polymerase II transcription machinery. It is composed of mobile elements that move relative to each other. NRPB7 is part of a subcomplex with NRPB4 that binds to a pocket formed by NRPB1, NRPB2 and NRPB6 at the base of the clamp element. The NRBP4-NRPB7 subcomplex seems to lock the clamp via NRPB7 in the closed conformation thus preventing double-stranded DNA to enter the active site cleft. The NRPB4-NRPB7 subcomplex binds single-stranded DNA and RNA. The chain is DNA-directed RNA polymerase II subunit 7 (NRPB7) from Arabidopsis thaliana (Mouse-ear cress).